The following is a 548-amino-acid chain: Chaperonin GroEL (548 aa).

ATP-binding positions include 30–33, lysine 51, 87–91, glycine 415, 479–481, and aspartate 495; these read TLGP, DGTTT, and NAA.

It belongs to the chaperonin (HSP60) family. Forms a cylinder of 14 subunits composed of two heptameric rings stacked back-to-back. Interacts with the co-chaperonin GroES.

It is found in the cytoplasm. The enzyme catalyses ATP + H2O + a folded polypeptide = ADP + phosphate + an unfolded polypeptide.. Its function is as follows. Together with its co-chaperonin GroES, plays an essential role in assisting protein folding. The GroEL-GroES system forms a nano-cage that allows encapsulation of the non-native substrate proteins and provides a physical environment optimized to promote and accelerate protein folding. The sequence is that of Chaperonin GroEL from Serratia proteamaculans (strain 568).